We begin with the raw amino-acid sequence, 45 residues long: Large ribosomal subunit protein bL34 (45 aa).

Residues 1–10 (MTQRTLGGTN) show a composition bias toward polar residues. The tract at residues 1-45 (MTQRTLGGTNRKQKRTSGFRARMRKSNGRKVIQARRKKGRHRLSV) is disordered. A compositionally biased stretch (basic residues) spans 11–45 (RKQKRTSGFRARMRKSNGRKVIQARRKKGRHRLSV).

The protein belongs to the bacterial ribosomal protein bL34 family.

This Crocosphaera subtropica (strain ATCC 51142 / BH68) (Cyanothece sp. (strain ATCC 51142)) protein is Large ribosomal subunit protein bL34.